A 73-amino-acid chain; its full sequence is Small ribosomal subunit protein bS18 (73 aa).

This sequence belongs to the bacterial ribosomal protein bS18 family. In terms of assembly, part of the 30S ribosomal subunit. Forms a tight heterodimer with protein bS6.

Binds as a heterodimer with protein bS6 to the central domain of the 16S rRNA, where it helps stabilize the platform of the 30S subunit. This is Small ribosomal subunit protein bS18 from Coxiella burnetii (strain Dugway 5J108-111).